A 442-amino-acid polypeptide reads, in one-letter code: 5-methylthioadenosine/S-adenosylhomocysteine deaminase (442 aa).

Zn(2+) is bound by residues histidine 70 and histidine 72. Positions 99 and 191 each coordinate substrate. A Zn(2+)-binding site is contributed by histidine 218. Glutamate 221 and aspartate 306 together coordinate substrate. Aspartate 306 contacts Zn(2+).

It belongs to the metallo-dependent hydrolases superfamily. MTA/SAH deaminase family. It depends on Zn(2+) as a cofactor.

It carries out the reaction S-adenosyl-L-homocysteine + H2O + H(+) = S-inosyl-L-homocysteine + NH4(+). It catalyses the reaction S-methyl-5'-thioadenosine + H2O + H(+) = S-methyl-5'-thioinosine + NH4(+). Functionally, catalyzes the deamination of 5-methylthioadenosine and S-adenosyl-L-homocysteine into 5-methylthioinosine and S-inosyl-L-homocysteine, respectively. Is also able to deaminate adenosine. This chain is 5-methylthioadenosine/S-adenosylhomocysteine deaminase, found in Nitratidesulfovibrio vulgaris (strain ATCC 29579 / DSM 644 / CCUG 34227 / NCIMB 8303 / VKM B-1760 / Hildenborough) (Desulfovibrio vulgaris).